The primary structure comprises 222 residues: uncharacterized protein (222 aa).

This is an uncharacterized protein from Archaeoglobus fulgidus (strain ATCC 49558 / DSM 4304 / JCM 9628 / NBRC 100126 / VC-16).